Here is a 146-residue protein sequence, read N- to C-terminus: Large ribosomal subunit protein uL15 (146 aa).

Positions Met1 to Arg18 are enriched in basic and acidic residues. A disordered region spans residues Met1–Gln54. The segment covering Ser42–Gly52 has biased composition (gly residues).

This sequence belongs to the universal ribosomal protein uL15 family. As to quaternary structure, part of the 50S ribosomal subunit.

Functionally, binds to the 23S rRNA. The polypeptide is Large ribosomal subunit protein uL15 (Staphylococcus aureus (strain Mu3 / ATCC 700698)).